Consider the following 576-residue polypeptide: MAGUK p55 subfamily member 7 (576 aa).

L27 domains are found at residues 10–63 and 65–122; these read SDTG…YEKE and PMPV…YDPV. One can recognise a PDZ domain in the interval 139–220; it reads IIRLVKNREP…AITFKIIPSI (82 aa). An SH3 domain is found at 228–298; it reads DGKMFVKALF…PSKQFQERRF (71 aa). The region spanning 368 to 560 is the Guanylate kinase-like domain; that stretch reads YRLVILVGPV…AYNELRSTLE (193 aa).

Belongs to the MAGUK family.

The protein localises to the membrane. It is found in the cell junction. It localises to the tight junction. Its subcellular location is the adherens junction. Functionally, acts as an important adapter that promotes epithelial cell polarity and tight junction formation. Involved in the assembly of protein complexes at sites of cell-cell contact. This chain is MAGUK p55 subfamily member 7 (mpp7), found in Xenopus tropicalis (Western clawed frog).